The following is a 145-amino-acid chain: Probable inactive ribonuclease-like protein 12 (145 aa).

The first 19 residues, 1–19, serve as a signal peptide directing secretion; that stretch reads MILMVIVFLLLLFWENELT. Asn88 is a glycosylation site (N-linked (GlcNAc...) asparagine).

It belongs to the pancreatic ribonuclease family.

The protein localises to the secreted. In terms of biological role, does not exhibit any ribonuclease activity. In Rattus norvegicus (Rat), this protein is Probable inactive ribonuclease-like protein 12 (Rnase12).